The chain runs to 198 residues: Dual specificity protein phosphatase 1 (198 aa).

A disordered region spans residues 1 to 20; the sequence is MSSRDRGSPSSSSSSSSLPG. Over residues 8–17 the composition is skewed to low complexity; that stretch reads SPSSSSSSSS. The caM binding domain 1 stretch occupies residues 26 to 47; sequence EKVKNQIQALVRVIKVARTYRD. The region spanning 50–191 is the Tyrosine-protein phosphatase domain; sequence VPSLIEQGLY…LQDLEKSMQV (142 aa). Catalysis depends on Cys135, which acts as the Phosphocysteine intermediate. Positions 151 to 180 are caM binding domain 2; sequence MKKHGMTLAQALQHVKSKRPVASPNAGFIR.

Belongs to the protein-tyrosine phosphatase family. Non-receptor class dual specificity subfamily. Interacts with calmodulin (CaM) in a calcium Ca(2+)-dependent manner. As to expression, expressed in roots, stems, leaves and flowers.

Its subcellular location is the nucleus. The protein resides in the cytoplasm. It catalyses the reaction O-phospho-L-tyrosyl-[protein] + H2O = L-tyrosyl-[protein] + phosphate. The catalysed reaction is O-phospho-L-seryl-[protein] + H2O = L-seryl-[protein] + phosphate. The enzyme catalyses O-phospho-L-threonyl-[protein] + H2O = L-threonyl-[protein] + phosphate. With respect to regulation, inhibited by sodium vanadate and sodium tungstate. NaF and spermifine repress specifically phosphoserine and phosphothreonine phosphatase activity. Has a dual specificity toward Ser/Thr and Tyr-containing proteins. Dephosphorylates MPK4 in vitro. The sequence is that of Dual specificity protein phosphatase 1 (DSPTP1) from Arabidopsis thaliana (Mouse-ear cress).